We begin with the raw amino-acid sequence, 676 residues long: Potassium voltage-gated channel subfamily KQT member 1 (676 aa).

Disordered stretches follow at residues 1–28 and 62–84; these read MAAA…RGSA and APPA…PRPP. Residues 1 to 120 lie on the Cytoplasmic side of the membrane; it reads MAAASSPPRA…YNFLERPTGW (120 aa). The residue at position 27 (serine 27) is a Phosphoserine; by PKA. Pro residues predominate over residues 62-73; it reads APPASPAAPAAP. Residues 121–142 form a helical membrane-spanning segment; the sequence is KCFVYHFAVFLIVLVCLIFSVL. The Extracellular segment spans residues 143 to 153; that stretch reads STIEQYAALAT. A helical membrane pass occupies residues 154–176; the sequence is GTLFWMEIVLVVFFGTEYVVRLW. The Cytoplasmic portion of the chain corresponds to 177-192; sequence SAGCRSKYVGLWGRLR. Residues 193-218 traverse the membrane as a helical segment; the sequence is FARKPISIIDLIVVVASMVVLCVGSK. Residues 219-226 are Extracellular-facing; that stretch reads GQVFATSA. The helical; Voltage-sensor transmembrane segment at 227 to 242 threads the bilayer; that stretch reads IRGIRFLQILRMLHVD. An interaction with KCNE3 region spans residues 238–246; it reads MLHVDRQGG. Residues 243-260 lie on the Cytoplasmic side of the membrane; it reads RQGGTWRLLGSVVFIHRQ. An a 1,2-diacyl-sn-glycero-3-phospho-(1D-myo-inositol-4,5-bisphosphate)-binding site is contributed by glutamine 244. A helical membrane pass occupies residues 261–283; sequence ELITTLYIGFLGLIFSSYFVYLA. At 284-299 the chain is on the extracellular side; sequence EKDAVNESGRVEFGSY. An N-linked (GlcNAc...) asparagine glycan is attached at asparagine 289. An intramembrane region (pore-forming) is located at residues 300–320; that stretch reads ADALWWGVVTVTTIGYGDKVP. Residues 321 to 322 are Extracellular-facing; the sequence is QT. Residues 323–348 traverse the membrane as a helical segment; the sequence is WVGKTIASCFSVFAISFFALPAGILG. The Cytoplasmic segment spans residues 349–676; that stretch reads SGFALKVQQK…VPRRGPDEGS (328 aa). Residues 370 to 382 are interaction with CALM; it reads AAASLIQTAWRCY. Phosphoserine is present on residues serine 407 and serine 409. The segment at 515–529 is interaction with CALM; calcium-dependent; it reads KVIRRMQYFVAKKKF. Residues 535–572 are interaction with KCNE1 C-terminus; it reads PYDVRDVIEQYSQGHLNLMVRIKELQRRLDQSIGKPSL. The stretch at 585–621 forms a coiled coil; sequence SNTIGARLNRVEDKVTQLDQRLALITDMLHQLLSLHG. The tract at residues 588 to 616 is interaction with AKAP9; that stretch reads IGARLNRVEDKVTQLDQRLALITDMLHQL. A C-terminal assembly domain (tetramerization) region spans residues 589–620; it reads GARLNRVEDKVTQLDQRLALITDMLHQLLSLH. The interval 620–676 is disordered; that stretch reads HGGSTPGSGGPPREGGAHITQPCGSGGSVDPELFLPSNTLPTYEQLTVPRRGPDEGS. Positions 623–632 are enriched in gly residues; sequence STPGSGGPPR. Residues 655 to 664 show a composition bias toward polar residues; the sequence is PSNTLPTYEQ.

It belongs to the potassium channel family. KQT (TC 1.A.1.15) subfamily. Kv7.1/KCNQ1 sub-subfamily. In terms of assembly, tetramer. Heterotetramer with KCNE1; targets to the membrane raft. Interacts (via C-terminus) with calmodulin; forms a heterooctameric structure (with 4:4 KCNQ1:CALM stoichiometry); the interaction is calcium-independent, constitutive, participates in the proper assembly of a functional channel and also acts a calcium sensor. KCNQ1 channels interact more strongly with Ca(2+)-CALM than with apoCALM. Interacts with AKAP9; targets protein kinase A (PKA) catalytic and regulatory subunits and protein phosphatase 1 (PP1) to the KCNQ1-KCNE1 complex, allowing PKA-mediated phosphorylation and increase of delayed rectifier potassium channel activity. Interacts with KCNE2; forms a heterooligomer complex that targets to the membrane raft and leading to currents with an apparently instantaneous activation, a rapid deactivation process and a linear current-voltage relationship and decreases the amplitude of the outward current. Interacts with AP2M1; mediates estrogen-induced internalization via clathrin-coated vesicles. Interacts with NEDD4L; promotes internalization and decreases I(Ks) currents. Interacts with USP2; counteracts the NEDD4L-specific down-regulation of I(Ks) and restore plasma membrane localization. Heterotetramer with KCNQ5; has a voltage-gated potassium channel activity. Interacts with KCNE3; four KCNE3 molecules are bound to one KCNQ1 tetramer (4:4 KCNQ1:KCNE3 stoichiometry); alters membrane raft localization; affects KCNQ1 structure and gating properties. Interacts with KCNE4; impairs KCNQ1 localization in lipid rafts and inhibits voltage-gated potassium channel activity. Interacts with KCNE5; impairs KCNQ1 localization in lipid rafts and only conducts current upon strong and continued depolarization. Interacts with SLC5A3; forms coregulatory channel-transporter complexes that modulate Na(+)-coupled myo-inositol influx through the transporter. In terms of processing, phosphorylation at Ser-27 by PKA; increases delayed rectifier potassium channel activity of the KCNQ1-KCNE1 complex through a macromolecular complex that includes PKA, PP1, and the targeting protein AKAP9. Post-translationally, ubiquitinated by NEDD4L; promotes internalization. The ubiquitinylated form is internalized through a clathrin-mediated endocytosis by interacting with AP2M1 and is recycled back to the cell membrane via RAB4A and RAB11A. Deubiquitinated by USP2; counteracts the NEDD4L-specific down-regulation of I(Ks) and restores the membrane localization. Abundantly expressed in heart, pancreas, prostate, kidney, small intestine and peripheral blood leukocytes. Less abundant in placenta, lung, spleen, colon, thymus, testis and ovaries.

The protein resides in the cell membrane. It is found in the cytoplasmic vesicle membrane. Its subcellular location is the early endosome. The protein localises to the membrane raft. It localises to the endoplasmic reticulum. The protein resides in the basolateral cell membrane. It is found in the apical cell membrane. The catalysed reaction is K(+)(in) = K(+)(out). With respect to regulation, PIP2 molecule is essential to activate KCNQ channels by inducing the coupling of the voltage-sensing domain (VSD) and the pore-forming domain (PD). Upon channel activation, PIP2 disrupts the VSD-calmodulin/CALM interactions, causing the release of CALM from the VSD which triggers the opening of the gate. Calcium potentiates KCNQ1 channel current through calcium-bound CALM. Calcium-bound CALM competes with PIP2 to stabilize the channel open state. Pore-forming subunit of the voltage-gated potassium (Kv) channel involved in the regulation of cardiomyocyte excitability and important in normal development and functions of myocardium, inner ear, stomach and colon. Associates with KCNE beta subunits that modulates current kinetics. Induces a voltage-dependent current by rapidly activating and slowly deactivating potassium-selective outward current. Also promotes a delayed voltage activated potassium current showing outward rectification characteristic. During beta-adrenergic receptor stimulation, participates in cardiac repolarization by associating with KCNE1 to form the I(Ks) cardiac potassium current that increases the amplitude and slows down the activation kinetics of outward potassium current I(Ks). Muscarinic agonist oxotremorine-M strongly suppresses KCNQ1/KCNE1 current. When associated with KCNE3, forms the potassium channel that is important for cyclic AMP-stimulated intestinal secretion of chloride ions. This interaction with KCNE3 is reduced by 17beta-estradiol, resulting in the reduction of currents. During conditions of increased substrate load, maintains the driving force for proximal tubular and intestinal sodium ions absorption, gastric acid secretion, and cAMP-induced jejunal chloride ions secretion. Allows the provision of potassium ions to the luminal membrane of the secretory canaliculus in the resting state as well as during stimulated acid secretion. When associated with KCNE2, forms a heterooligomer complex leading to currents with an apparently instantaneous activation, a rapid deactivation process and a linear current-voltage relationship and decreases the amplitude of the outward current. When associated with KCNE4, inhibits voltage-gated potassium channel activity. When associated with KCNE5, this complex only conducts current upon strong and continued depolarization. Also forms a heterotetramer with KCNQ5; has a voltage-gated potassium channel activity. Binds with phosphatidylinositol 4,5-bisphosphate. KCNQ1-KCNE2 channel associates with Na(+)-coupled myo-inositol symporter in the apical membrane of choroid plexus epithelium and regulates the myo-inositol gradient between blood and cerebrospinal fluid with an impact on neuron excitability. Functionally, non-functional alone but modulatory when coexpressed with the full-length isoform 1. The chain is Potassium voltage-gated channel subfamily KQT member 1 from Homo sapiens (Human).